The sequence spans 418 residues: Putative ion-transport protein YfeO (418 aa).

Transmembrane regions (helical) follow at residues 15–37 (PAVAIGIASSLILIVVMKIASVL), 57–79 (LWIIGVLTLTGIAVGLVIRFSQG), 99–118 (ALPRLIVALILGLAGGVSLG), 149–171 (ILASAGTIGALFGTPVAAALIFS), 186–208 (LFAPLMAAAAGALTTGLFFHPHF), 221–243 (TDILSGAIVAAIAIAAGMVAVWC), 258–280 (VLVLGIGGFILGILGVIGGPVSL), 301–323 (YFLLAVIKLAALVVAAASGFRGG), 343–363 (VPAVPAAITVSCAILGIVLVV), and 376–398 (VVVPNTTLLPLLCIVMLPAWLLL).

It belongs to the chloride channel (TC 2.A.49) family.

It is found in the cell membrane. The polypeptide is Putative ion-transport protein YfeO (yfeO) (Shigella flexneri).